Consider the following 287-residue polypeptide: Uroplakin-3a (287 aa).

An N-terminal signal peptide occupies residues 1-18 (MPPLWALLALGCLRFGSA). Residues 19–207 (VNLQPQLASV…DTWPGRRSGG (189 aa)) are Lumenal-facing. Asn74, Asn139, and Asn170 each carry an N-linked (GlcNAc...) asparagine glycan. The chain crosses the membrane as a helical span at residues 208 to 235 (MIVITSILGSLPFFLLVGFAGAIALSLV). The Cytoplasmic segment spans residues 236 to 287 (DMGSSDGETTHDSQITQEAVPKSLGASESSYTSVNRGPPLDRAEVYSSKLQD). Residues 242 to 287 (GETTHDSQITQEAVPKSLGASESSYTSVNRGPPLDRAEVYSSKLQD) form a disordered region. Polar residues predominate over residues 261 to 270 (ASESSYTSVN).

The protein belongs to the uroplakin-3 family. Heterodimer with uroplakin-1B (UPK1B). Expressed in ureter.

Its subcellular location is the endoplasmic reticulum membrane. In terms of biological role, component of the asymmetric unit membrane (AUM); a highly specialized biomembrane elaborated by terminally differentiated urothelial cells. May play an important role in AUM-cytoskeleton interaction in terminally differentiated urothelial cells. It also contributes to the formation of urothelial glycocalyx which may play an important role in preventing bacterial adherence. This is Uroplakin-3a (UPK3A) from Homo sapiens (Human).